The chain runs to 84 residues: Small ribosomal subunit protein bS16 (84 aa).

This sequence belongs to the bacterial ribosomal protein bS16 family.

This Ralstonia pickettii (strain 12J) protein is Small ribosomal subunit protein bS16.